The primary structure comprises 393 residues: Protein TsgA (393 aa).

At 1-10 the chain is on the cytoplasmic side; the sequence is MTNSNRIKLT. Residues 11-31 form a helical membrane-spanning segment; sequence WISFLSYALTGALVIVTGMVM. At 32-50 the chain is on the periplasmic side; it reads GNIADYFHLPVSSMSNTFT. The chain crosses the membrane as a helical span at residues 51–71; the sequence is FLNAGILISIFLNAWLMEIIP. Residues 72–77 are Cytoplasmic-facing; sequence LKTQLR. Residues 78-98 traverse the membrane as a helical segment; sequence FGFILMVLAVAGLMFGHSLAL. Topologically, residues 99–100 are periplasmic; sequence FS. A helical membrane pass occupies residues 101-121; sequence AAMFVLGLVSGITMSIGTFLI. Residues 122–133 lie on the Cytoplasmic side of the membrane; that stretch reads TQLYEGRQRGSR. A helical membrane pass occupies residues 134-154; that stretch reads LLFTDSFFSMAGMIFPMVAAF. Topologically, residues 155 to 161 are periplasmic; sequence LLARSIE. Residues 162-182 traverse the membrane as a helical segment; that stretch reads WYWVYACIGLVYLAIFILTFG. The Cytoplasmic portion of the chain corresponds to 183-205; sequence CEFPALGKHAQHSQAPVVKEKWG. The helical transmembrane segment at 206–226 threads the bilayer; it reads IGVLFLAVAALCYILGQLGFI. The Periplasmic segment spans residues 227–244; sequence SWVPEYAKGLGMSLNDAG. Residues 245-265 traverse the membrane as a helical segment; sequence ALVSDFWMSYMFGMWAFSFIL. The Cytoplasmic portion of the chain corresponds to 266–272; it reads RFFDLQR. Residues 273–293 traverse the membrane as a helical segment; the sequence is ILTVLAGMAAVLMYLFITGTQ. Residues 294 to 297 are Periplasmic-facing; it reads AHMP. A helical membrane pass occupies residues 298–318; that stretch reads WFILTLGFFSSAIYTSIITLG. The Cytoplasmic segment spans residues 319-331; it reads SQQTKVASPKLVN. The helical transmembrane segment at 332–352 threads the bilayer; that stretch reads FILTCGTIGTMLTFVVTGPIV. Residues 353–360 lie on the Periplasmic side of the membrane; that stretch reads AHSGPQAA. A helical membrane pass occupies residues 361–381; sequence LLTANGLYAVVFVMCFALGFV. Topologically, residues 382 to 393 are cytoplasmic; sequence SRHRQHSAPATH.

Belongs to the major facilitator superfamily. TsgA family.

It localises to the cell inner membrane. In Salmonella choleraesuis (strain SC-B67), this protein is Protein TsgA.